Reading from the N-terminus, the 1609-residue chain is Probable outer membrane protein pmp21 (1609 aa).

A signal peptide spans 1–30; sequence MVAKKTVRSYRSSFSHSVIVAILSAGIAFE. The segment covering 132–145 has biased composition (polar residues); it reads FSQPTQEPDTSNAV. 2 disordered regions span residues 132–183 and 640–677; these read FSQP…KSPE and TAPV…EVPP. Composition is skewed to basic and acidic residues over residues 149-175 and 651-672; these read ISSD…KEVS and NKDE…KTVE. An Autotransporter domain is found at 1328 to 1609; sequence ELDFSTNVWG…DFNGGIRIIF (282 aa).

This sequence belongs to the PMP outer membrane protein family.

It localises to the secreted. Its subcellular location is the cell wall. The protein localises to the cell outer membrane. This Chlamydia pneumoniae (Chlamydophila pneumoniae) protein is Probable outer membrane protein pmp21 (pmp21).